A 363-amino-acid polypeptide reads, in one-letter code: Mannose-1-phosphate guanyltransferase (363 aa).

Belongs to the transferase hexapeptide repeat family.

It localises to the cytoplasm. It carries out the reaction alpha-D-mannose 1-phosphate + GTP + H(+) = GDP-alpha-D-mannose + diphosphate. Its pathway is nucleotide-sugar biosynthesis; GDP-alpha-D-mannose biosynthesis; GDP-alpha-D-mannose from alpha-D-mannose 1-phosphate (GTP route): step 1/1. Involved in cell wall synthesis where it is required for glycosylation. Involved in cell cycle progression through cell-size checkpoint. Required for the correct assembly of the septum. In Schizosaccharomyces pombe (strain 972 / ATCC 24843) (Fission yeast), this protein is Mannose-1-phosphate guanyltransferase (mpg1).